The primary structure comprises 523 residues: Ribonuclease Y (523 aa).

Residues 7–24 traverse the membrane as a helical segment; it reads LSSLASALLAGGGTYLVY. One can recognise a KH domain in the interval 213-279; it reads LINVVNLPND…TRTIEALVED (67 aa). Residues 339–432 enclose the HD domain; sequence ALGHSLEVAN…VCAADALSAA (94 aa).

Belongs to the RNase Y family.

It localises to the cell membrane. Endoribonuclease that initiates mRNA decay. The sequence is that of Ribonuclease Y from Wolinella succinogenes (strain ATCC 29543 / DSM 1740 / CCUG 13145 / JCM 31913 / LMG 7466 / NCTC 11488 / FDC 602W) (Vibrio succinogenes).